Reading from the N-terminus, the 112-residue chain is Nucleoid-associated protein FTN_1196 (112 aa).

A disordered region spans residues Met1–Glu27. Over residues Glu17 to Glu27 the composition is skewed to basic and acidic residues.

It belongs to the YbaB/EbfC family. Homodimer.

The protein resides in the cytoplasm. The protein localises to the nucleoid. Binds to DNA and alters its conformation. May be involved in regulation of gene expression, nucleoid organization and DNA protection. The protein is Nucleoid-associated protein FTN_1196 of Francisella tularensis subsp. novicida (strain U112).